The following is a 796-amino-acid chain: Protein translocase subunit SecA 2 (796 aa).

ATP-binding positions include glutamine 84, 102–106 (GEGKT), and aspartate 496.

Belongs to the SecA family. As to quaternary structure, monomer and homodimer. Part of the essential Sec protein translocation apparatus which comprises SecA, SecYEG and auxiliary proteins SecDF. Other proteins may also be involved.

The protein resides in the cell membrane. Its subcellular location is the cytoplasm. The catalysed reaction is ATP + H2O + cellular proteinSide 1 = ADP + phosphate + cellular proteinSide 2.. In terms of biological role, part of the Sec protein translocase complex. Interacts with the SecYEG preprotein conducting channel. Has a central role in coupling the hydrolysis of ATP to the transfer of proteins into and across the cell membrane, serving as an ATP-driven molecular motor driving the stepwise translocation of polypeptide chains across the membrane. The sequence is that of Protein translocase subunit SecA 2 from Staphylococcus aureus (strain MRSA252).